The chain runs to 195 residues: GTP-dependent dephospho-CoA kinase (195 aa).

Residues D49, V50, D68, E127, and D150 each contribute to the GTP site.

Belongs to the GTP-dependent DPCK family.

The catalysed reaction is 3'-dephospho-CoA + GTP = GDP + CoA + H(+). The protein operates within cofactor biosynthesis; coenzyme A biosynthesis. In terms of biological role, catalyzes the GTP-dependent phosphorylation of the 3'-hydroxyl group of dephosphocoenzyme A to form coenzyme A (CoA). In Methanosarcina mazei (strain ATCC BAA-159 / DSM 3647 / Goe1 / Go1 / JCM 11833 / OCM 88) (Methanosarcina frisia), this protein is GTP-dependent dephospho-CoA kinase.